A 444-amino-acid chain; its full sequence is Exopolygalacturonase clone GBGA483 (444 aa).

An N-terminal signal peptide occupies residues 1 to 23 (MVGSHKASGVLLVLLVVMATTIA). PbH1 repeat units lie at residues 220 to 246 (CKNI…HIGR), 247 to 268 (SNGV…SIGD), 270 to 290 (TENL…SIGS), 300 to 321 (VKGV…RIKT), and 330 to 351 (ASNI…LIDQ). Asparagine 222 carries N-linked (GlcNAc...) asparagine glycosylation. Aspartate 261 (proton donor) is an active-site residue. A disulfide bridge links cysteine 263 with cysteine 280. Histidine 284 is an active-site residue. Asparagine 342 carries an N-linked (GlcNAc...) asparagine glycan. 2 disulfide bridges follow: cysteine 391-cysteine 397 and cysteine 420-cysteine 436.

This sequence belongs to the glycosyl hydrolase 28 family.

The protein localises to the secreted. It localises to the cell wall. The enzyme catalyses [(1-&gt;4)-alpha-D-galacturonosyl](n) + H2O = alpha-D-galacturonate + [(1-&gt;4)-alpha-D-galacturonosyl](n-1). Its function is as follows. May function in depolymerizing pectin during pollen development, germination, and tube growth. Acts as an exo-polygalacturonase. The polypeptide is Exopolygalacturonase clone GBGA483 (Arabidopsis thaliana (Mouse-ear cress)).